We begin with the raw amino-acid sequence, 249 residues long: Geranylgeranylglyceryl phosphate synthase (249 aa).

Mg(2+) contacts are provided by aspartate 20 and serine 49. Residues 169 to 175 (YLDAGSG), 200 to 201 (GG), and 222 to 223 (GN) contribute to the sn-glycerol 1-phosphate site.

Belongs to the GGGP/HepGP synthase family. Group II subfamily. As to quaternary structure, homohexamer. The cofactor is Mg(2+).

It carries out the reaction sn-glycerol 1-phosphate + (2E,6E,10E)-geranylgeranyl diphosphate = sn-3-O-(geranylgeranyl)glycerol 1-phosphate + diphosphate. Prenyltransferase that catalyzes the transfer of the geranylgeranyl moiety of geranylgeranyl diphosphate (GGPP) to the C3 hydroxyl of sn-glycerol-1-phosphate (G1P). This chain is Geranylgeranylglyceryl phosphate synthase, found in Spirosoma linguale (strain ATCC 33905 / DSM 74 / LMG 10896 / Claus 1).